The sequence spans 130 residues: GYLYHPAYYYGAGASTQFKNQDAIGNYNFGYNEGHATGGTFRREFGDAFGNVKVGSYGLTDADGRRRIVTYKADASGFNANVHTNEPGTDSSKDPANTLVNKAVLPTTYYGGYYPGHYYGHYAPYHYGYY.

In terms of domain architecture, Chitin-binding type R&amp;R spans 24–90 (IGNYNFGYNE…NVHTNEPGTD (67 aa)).

This Limulus polyphemus (Atlantic horseshoe crab) protein is Cuticle protein 14 isoform b.